We begin with the raw amino-acid sequence, 311 residues long: Heme A synthase (311 aa).

The Cytoplasmic portion of the chain corresponds to Met1 to Lys6. A helical transmembrane segment spans residues Trp7–Thr27. Residues Lys28–Arg62 are Extracellular-facing. Cys35 and Cys42 are disulfide-bonded. Residue Glu58 is part of the active site. His61 lines the heme o pocket. A helical membrane pass occupies residues Leu63 to Tyr83. The Cytoplasmic portion of the chain corresponds to Lys84–Thr91. Residues Leu92–Val112 traverse the membrane as a helical segment. Residues Trp113–Ala121 lie on the Extracellular side of the membrane. The chain crosses the membrane as a helical span at residues Ile122–Phe142. His123 provides a ligand contact to heme o. Residues Glu143 to Met159 lie on the Cytoplasmic side of the membrane. A helical transmembrane segment spans residues Lys160–Val180. Residues Arg181–Met211 are Extracellular-facing. Cys189 and Cys195 are disulfide-bonded. Residues Gly212–Ile232 form a helical membrane-spanning segment. His213 is a binding site for heme b. Residues Arg233–Trp243 lie on the Cytoplasmic side of the membrane. Residues Gly244–Phe264 traverse the membrane as a helical segment. Topologically, residues Thr265–Met271 are extracellular. Residues Ala272–Leu292 traverse the membrane as a helical segment. Residue His275 participates in heme b binding. Over Gly293–Lys311 the chain is Cytoplasmic.

The protein belongs to the COX15/CtaA family. Type 1 subfamily. Interacts with CtaB. Requires heme b as cofactor.

It localises to the cell membrane. It carries out the reaction Fe(II)-heme o + 2 A + H2O = Fe(II)-heme a + 2 AH2. The protein operates within porphyrin-containing compound metabolism; heme A biosynthesis; heme A from heme O: step 1/1. Functionally, catalyzes the conversion of heme O to heme A by two successive hydroxylations of the methyl group at C8. The first hydroxylation forms heme I, the second hydroxylation results in an unstable dihydroxymethyl group, which spontaneously dehydrates, resulting in the formyl group of heme A. The polypeptide is Heme A synthase (Bacillus cereus (strain G9842)).